A 204-amino-acid polypeptide reads, in one-letter code: Large ribosomal subunit protein uL4 (204 aa).

Positions 49-75 are disordered; sequence TKGRSDVSGGGKKPWRQKGRGGARAGS.

It belongs to the universal ribosomal protein uL4 family. In terms of assembly, part of the 50S ribosomal subunit.

In terms of biological role, one of the primary rRNA binding proteins, this protein initially binds near the 5'-end of the 23S rRNA. It is important during the early stages of 50S assembly. It makes multiple contacts with different domains of the 23S rRNA in the assembled 50S subunit and ribosome. Its function is as follows. Forms part of the polypeptide exit tunnel. In Campylobacter jejuni subsp. jejuni serotype O:23/36 (strain 81-176), this protein is Large ribosomal subunit protein uL4.